The sequence spans 202 residues: NADH-quinone oxidoreductase subunit C (202 aa).

This sequence belongs to the complex I 30 kDa subunit family. In terms of assembly, NDH-1 is composed of 14 different subunits. Subunits NuoB, C, D, E, F, and G constitute the peripheral sector of the complex.

It is found in the cell inner membrane. It carries out the reaction a quinone + NADH + 5 H(+)(in) = a quinol + NAD(+) + 4 H(+)(out). NDH-1 shuttles electrons from NADH, via FMN and iron-sulfur (Fe-S) centers, to quinones in the respiratory chain. The immediate electron acceptor for the enzyme in this species is believed to be ubiquinone. Couples the redox reaction to proton translocation (for every two electrons transferred, four hydrogen ions are translocated across the cytoplasmic membrane), and thus conserves the redox energy in a proton gradient. The sequence is that of NADH-quinone oxidoreductase subunit C from Hyphomonas neptunium (strain ATCC 15444).